The sequence spans 1025 residues: Exocyst complex component 6 (1025 aa).

Composition is skewed to basic and acidic residues over residues 1-10 (MSNKKQKEEI) and 22-52 (MVRDKDKEQKEEKREKKEKKRLEKKEAENVK). 3 disordered regions span residues 1–122 (MSNK…TRHL), 135–154 (LSSQDRSSSLPHSSQDDQAK), and 666–691 (QFGDKNLNNNNNNDDDDDYFDEDENE). Residues 19–68 (LKTMVRDKDKEQKEEKREKKEKKRLEKKEAENVKKEKKKEKKELKKIGKA) adopt a coiled-coil conformation. Residues 71 to 93 (SGSITSDSSTHSGAQEFDSYGND) show a composition bias toward low complexity. Over residues 104-118 (SIDSNGLSSSGQPMQ) the composition is skewed to polar residues. 2 stretches are compositionally biased toward low complexity: residues 135 to 147 (LSSQDRSSSLPHS) and 666 to 677 (QFGDKNLNNNNN). Acidic residues predominate over residues 678-691 (NDDDDDYFDEDENE).

It belongs to the SEC15 family. As to quaternary structure, the exocyst complex is composed of sec3/exoc1, sec5/exoc2, sec6/exoc3, sec8/exoc4, sec10/exoc5, sec15/exoc6, exo70/exoc7 and exo84/exoc8.

The protein resides in the cytoplasm. The protein localises to the perinuclear region. It localises to the midbody. Its subcellular location is the midbody ring. Functionally, component of the exocyst complex involved in the docking of exocytic vesicles with fusion sites on the plasma membrane. The chain is Exocyst complex component 6 (exoc6) from Dictyostelium discoideum (Social amoeba).